Reading from the N-terminus, the 234-residue chain is Purine nucleoside phosphorylase DeoD-type (234 aa).

An a purine D-ribonucleoside-binding site is contributed by His-5. Phosphate contacts are provided by residues Gly-21, Arg-25, Arg-44, and 88 to 91; that span reads RVGT. A purine D-ribonucleoside is bound by residues 178–180 and 202–203; these read EME and SD. Asp-203 acts as the Proton donor in catalysis.

The protein belongs to the PNP/UDP phosphorylase family. As to quaternary structure, homohexamer; trimer of homodimers.

It carries out the reaction a purine D-ribonucleoside + phosphate = a purine nucleobase + alpha-D-ribose 1-phosphate. It catalyses the reaction a purine 2'-deoxy-D-ribonucleoside + phosphate = a purine nucleobase + 2-deoxy-alpha-D-ribose 1-phosphate. Functionally, catalyzes the reversible phosphorolytic breakdown of the N-glycosidic bond in the beta-(deoxy)ribonucleoside molecules, with the formation of the corresponding free purine bases and pentose-1-phosphate. This is Purine nucleoside phosphorylase DeoD-type from Lactococcus lactis subsp. cremoris (strain MG1363).